A 278-amino-acid chain; its full sequence is Gasdermin-like protein het-Q1 (278 aa).

The protein belongs to the gasdermin family. In terms of assembly, homooligomer; forms a homooligomeric ring-shaped pore complex when inserted in the membrane. In terms of processing, the precursor form is cleaved by het-Q2, generating the pore-forming protein (Gasdermin-like protein het-Q1, N-terminal).

It is found in the cell membrane. Its function is as follows. Gasdermin-like protein involved in heterokaryon incompatibility, a process that ensures that during spontaneous vegetative cell fusion, only compatible cells from the same colony survive (non-self-recognition). In P.anserina, the het-q locus exists as 2 incompatible alleles, het-Q1 (this entry) and het-Q2 (AC P0DW09). This form constitutes the precursor of the pore-forming protein: during the allorecognition process, it is cleaved by het-Q2, releasing the N-terminal moiety (Gasdermin-like protein het-Q1, N-terminal) that binds to membranes and forms pores, triggering cell death. Functionally, pore-forming protein that causes membrane permeabilization and cell death. Released upon cleavage and maturation by het-Q2 and binds to membrane inner leaflet lipids. Homooligomerizes within the membrane and forms pores of 10-15 nanometers (nm) of inner diameter, triggering cell death. The chain is Gasdermin-like protein het-Q1 from Podospora anserina (strain S / ATCC MYA-4624 / DSM 980 / FGSC 10383) (Pleurage anserina).